Here is a 590-residue protein sequence, read N- to C-terminus: uncharacterized protein (590 aa).

At 1-68 (MKFSKPKFSM…SQRVWGPWNY (68 aa)) the chain is on the cytoplasmic side. Residues 69–89 (VAFWLADSVNVNTWMIAGTAV) traverse the membrane as a helical segment. Residues 90 to 94 (ESGLS) lie on the Extracellular side of the membrane. A helical membrane pass occupies residues 95-115 (WWEAWITVWVGYTIAAFILTI). The Cytoplasmic segment spans residues 116-124 (AGRAGAVYH). A helical transmembrane segment spans residues 125 to 145 (ISFPVLSRSSFGIWGSLWPIL). Topologically, residues 146-149 (NRAV) are extracellular. A helical membrane pass occupies residues 150–170 (MACVWYGVQAWIGGECVTLMI). Residues 171–194 (RSIWPSFSHIPNTMAKSGTETYQW) are Cytoplasmic-facing. The helical transmembrane segment at 195 to 215 (VGFFIFWLISNVAIWFPVYQI) threads the bilayer. Over 216 to 218 (RHL) the chain is Extracellular. The helical transmembrane segment at 219 to 239 (FTAKSFLAPPAAIAFLIWALV) threads the bilayer. The Cytoplasmic portion of the chain corresponds to 240-258 (KAHGAGDAIHAKTQLSTWN). A helical membrane pass occupies residues 259 to 279 (HGWAVTAGIISCLDNFATLIV). Over 280–298 (NNPDFTRFATTPNAPIFPQ) the chain is Extracellular. Residues 299-319 (LITIPMGFGITTLIGVLVGSA) form a helical membrane-spanning segment. Residues 320-390 (SKSIYGENIW…LCPMFINIRR (71 aa)) lie on the Cytoplasmic side of the membrane. Residues 391–411 (GGYIASIIGICMCPWNLLSSS) form a helical membrane-spanning segment. The Extracellular segment spans residues 412–418 (NSFANSL). A helical transmembrane segment spans residues 419–439 (SAYAVFLSSFAGILIADYFVI). Topologically, residues 440–467 (RKGYLKVDALYTINPNEPYWFTYGINLR) are cytoplasmic. Residues 468–488 (AFASYICGLLINVVGLAGAVG) traverse the membrane as a helical segment. Residues 489–500 (DKVPKAALTMNN) are Extracellular-facing. The helical transmembrane segment at 501–521 (IAYLLGIVTSFLSHLIICKIF) threads the bilayer. Residues 522-590 (PVTACGEKFL…GIDIKESSVF (69 aa)) lie on the Cytoplasmic side of the membrane. Residues 566 to 590 (VSYDSKEKSDDGKSGGIDIKESSVF) are disordered.

Belongs to the purine-cytosine permease (2.A.39) family.

The protein localises to the cytoplasm. The protein resides in the nucleus. Its subcellular location is the membrane. This is an uncharacterized protein from Schizosaccharomyces pombe (strain 972 / ATCC 24843) (Fission yeast).